Consider the following 72-residue polypeptide: Brevinin-2SN4 (72 aa).

The first 22 residues, 1-22 (MFTMKKPMLLLFFLGMISMSLC), serve as a signal peptide directing secretion. The propeptide at 23–40 (QDERGADEDDGGEMTEEE) is removed in mature form. A disulfide bridge connects residues C66 and C72.

This sequence belongs to the frog skin active peptide (FSAP) family. Brevinin subfamily. As to expression, expressed by the skin glands.

It localises to the secreted. Antimicrobial peptide. Active against a variety of Gram-negative and Gram-positive bacterial strains. Not active against fungi. Shows very weak hemolytic activity against human erythrocytes. In Sylvirana spinulosa (Fine-spined frog), this protein is Brevinin-2SN4.